Reading from the N-terminus, the 257-residue chain is Protein LigF (257 aa).

Residues 1 to 82 (MTLKLYSFGP…YLEDVFPESG (82 aa)) enclose the GST N-terminal domain. The region spanning 89-257 (DPFKRAEMRV…LLKRQNEKVA (169 aa)) is the GST C-terminal domain.

Belongs to the GST superfamily.

Lignin degradation enzyme. The sequence is that of Protein LigF (ligF) from Sphingobium sp. (strain NBRC 103272 / SYK-6).